Reading from the N-terminus, the 218-residue chain is Methylthioribulose-1-phosphate dehydratase (218 aa).

Residues His107 and His109 each coordinate Zn(2+).

This sequence belongs to the aldolase class II family. MtnB subfamily. It depends on Zn(2+) as a cofactor.

The enzyme catalyses 5-(methylsulfanyl)-D-ribulose 1-phosphate = 5-methylsulfanyl-2,3-dioxopentyl phosphate + H2O. Its pathway is amino-acid biosynthesis; L-methionine biosynthesis via salvage pathway; L-methionine from S-methyl-5-thio-alpha-D-ribose 1-phosphate: step 2/6. In terms of biological role, catalyzes the dehydration of methylthioribulose-1-phosphate (MTRu-1-P) into 2,3-diketo-5-methylthiopentyl-1-phosphate (DK-MTP-1-P). This Xylella fastidiosa (strain M12) protein is Methylthioribulose-1-phosphate dehydratase.